A 174-amino-acid polypeptide reads, in one-letter code: Adipose-secreted signaling protein (174 aa).

A2 carries the post-translational modification N-acetylalanine. The residue at position 147 (T147) is a Phosphothreonine.

Belongs to the ADISSP family.

The protein resides in the secreted. Functionally, adipocyte-secreted protein (adipokine) that acts as a key regulator for white adipose tissue (WAT) thermogenesis and glucose homeostasis at least in part through activation of protein kinase A (PKA). This Homo sapiens (Human) protein is Adipose-secreted signaling protein.